A 434-amino-acid polypeptide reads, in one-letter code: tRNA dimethylallyltransferase (434 aa).

Residue 10–17 (GTTGAGKS) participates in ATP binding. Position 12–17 (12–17 (TGAGKS)) interacts with substrate. 2 interaction with substrate tRNA regions span residues 35-38 (DSMQ) and 166-170 (RKIRR). Residues 211–233 (SLVLMPRLDKRVDKMLSHGLVDE) are interaction with isopentenylpyrophosphate transferase. Interaction with substrate tRNA regions lie at residues 256-258 (QCI), 281-299 (RMKVSTRQYAKSQKKWIQS), and 291-298 (KSQKKWIQ). The Matrin-type zinc-finger motif lies at 380-416 (FVCEECLDKRGDPFTVIGEDAFNVHIKSRKHKTTVRR).

This sequence belongs to the IPP transferase family.

The protein localises to the mitochondrion. The protein resides in the cytoplasm. It is found in the nucleus. The enzyme catalyses adenosine(37) in tRNA + dimethylallyl diphosphate = N(6)-dimethylallyladenosine(37) in tRNA + diphosphate. In terms of biological role, catalyzes the transfer of a dimethylallyl group onto the adenine at position 37 of both cytosolic and mitochondrial tRNAs, leading to the formation of N6-(dimethylallyl)adenosine (i(6)A). The chain is tRNA dimethylallyltransferase (tit1) from Schizosaccharomyces pombe (strain 972 / ATCC 24843) (Fission yeast).